The following is a 248-amino-acid chain: Probable septum site-determining protein MinC (248 aa).

Positions 94–125 (GMPPAMRGGQPAADFEAPAGEPQANPGAPEPQ) are disordered.

This sequence belongs to the MinC family. In terms of assembly, interacts with MinD and FtsZ.

Cell division inhibitor that blocks the formation of polar Z ring septums. Rapidly oscillates between the poles of the cell to destabilize FtsZ filaments that have formed before they mature into polar Z rings. Prevents FtsZ polymerization. In Brucella abortus (strain S19), this protein is Probable septum site-determining protein MinC.